Consider the following 359-residue polypeptide: 5-amino-6-(D-ribitylamino)uracil--L-tyrosine 4-hydroxyphenyl transferase (359 aa).

The 238-residue stretch at 45 to 282 folds into the Radical SAM core domain; the sequence is VTYVVNANIN…TYAISRIFFK (238 aa). Residues cysteine 59, cysteine 63, and cysteine 66 each contribute to the [4Fe-4S] cluster site.

The protein belongs to the radical SAM superfamily. CofH family. In terms of assembly, consists of two subunits, CofG and CofH. Requires [4Fe-4S] cluster as cofactor.

The catalysed reaction is 5-amino-6-(D-ribitylamino)uracil + L-tyrosine + S-adenosyl-L-methionine = 5-amino-5-(4-hydroxybenzyl)-6-(D-ribitylimino)-5,6-dihydrouracil + 2-iminoacetate + 5'-deoxyadenosine + L-methionine + H(+). It participates in cofactor biosynthesis; coenzyme F0 biosynthesis. Its function is as follows. Catalyzes the radical-mediated synthesis of 5-amino-5-(4-hydroxybenzyl)-6-(D-ribitylimino)-5,6-dihydrouracil from 5-amino-6-(D-ribitylamino)uracil and L-tyrosine. This chain is 5-amino-6-(D-ribitylamino)uracil--L-tyrosine 4-hydroxyphenyl transferase, found in Methanococcus maripaludis (strain C5 / ATCC BAA-1333).